Reading from the N-terminus, the 385-residue chain is Putative F-box protein At1g47765 (385 aa).

Residues 1–19 (MEQQKQKKRKVVSKSKRTQ) are compositionally biased toward basic residues. Positions 1-24 (MEQQKQKKRKVVSKSKRTQSKSAS) are disordered. The F-box domain occupies 20–69 (SKSASSLPLDLTSEILLRLPEKSIARFRCVSKLWLSITTDPYFINLFETR).

This chain is Putative F-box protein At1g47765, found in Arabidopsis thaliana (Mouse-ear cress).